The following is a 591-amino-acid chain: Acyl-CoA-dependent acyltransferase MAC1 (591 aa).

A peroxisomal targeting signal type 1 region spans residues 589–591 (ARL).

Belongs to the trichothecene O-acetyltransferase family.

Its subcellular location is the peroxisome. Its pathway is secondary metabolite biosynthesis. Acyl-CoA-dependent acyltransferase; part of the gene cluster that mediates the biosynthesis of mannosylerythritol lipids (MELs), surface-active substances that enhance the availability of water-insoluble substrates. Mannosylerythritol lipid production is responsible for hemolytic activity of Ustilago maydis. Depending on the number of acetyl groups, mannosylerythritol lipids can be differentiated into MEL A (fully acetylated), MEL B and MEL C (monoacetylated at R-6 and R-4, respectively), and the fully deacetylated MEL D. The first step in the pathway is the generation of mannosylerythritol by the glycosyltransferase EMT1 which catalyzes the transfer of GDP-mannose to the C-4 atom of meso-erythritol. This reaction has to be stereospecific, since only mannosyl-D-erythritol is generated. The produced disaccharide is subsequently acylated with fatty acids of various lengths derived from the peroxisomal beta-oxidation by the peroxisomal acyltransferases MAC1 and MAC2 at positions C-2 and C-3, repectively. The existence of MEL derivatives which carry an acetyl group at C-2 implies that at least MAC1 also accepts acetyl-CoA as a donor. The final step of MEL biosynthesis is the acetylation of the fully acylated mannosylerythritol lipids catalyzed by the acetyl-CoA-dependent acetyltransferase MAT1. MAT1 displays a relaxed regioselectivity and is able to transfer acetylgroups to both positions C-4 and C-6 of the mannosyl moiety. The polypeptide is Acyl-CoA-dependent acyltransferase MAC1 (Mycosarcoma maydis (Corn smut fungus)).